We begin with the raw amino-acid sequence, 229 residues long: MVEHSPHRPIRSFVLRQGRLSNAQRRAHETLMPKYGIPYSGKLLDLAIIFSRSAPKFLEIGFGMGETTALIAQAHPQNDYLAAEVHTPGMGSLLKQVEELELTNIRVIQHDAVDVLQHALPPECLDGVHVFFPDPWPKARHHKRRLIQAEFVDLLCSRLKPGGYIHVATDWEDYAEQILEVLSGEPHLSNTAVGYAPRPEYRPLTKFEQRGLRLGHEVWDVIFRKKQGA.

Positions 59, 84, 111, and 134 each coordinate S-adenosyl-L-methionine. D134 is a catalytic residue. Substrate is bound by residues K138, D170, and 205–208 (TKFE).

It belongs to the class I-like SAM-binding methyltransferase superfamily. TrmB family.

The catalysed reaction is guanosine(46) in tRNA + S-adenosyl-L-methionine = N(7)-methylguanosine(46) in tRNA + S-adenosyl-L-homocysteine. The protein operates within tRNA modification; N(7)-methylguanine-tRNA biosynthesis. Functionally, catalyzes the formation of N(7)-methylguanine at position 46 (m7G46) in tRNA. The polypeptide is tRNA (guanine-N(7)-)-methyltransferase (Nitrosospira multiformis (strain ATCC 25196 / NCIMB 11849 / C 71)).